The chain runs to 386 residues: Indole-3-acetate O-methyltransferase 1 (386 aa).

Y30 contacts S-adenosyl-L-methionine. Substrate is bound by residues Y30 and 33–37 (NSQAQ). S-adenosyl-L-methionine-binding positions include G72, 72–73 (GC), N78, 108–111 (FSDL), D110, 152–154 (SFY), and 169–171 (AFS). Position 170–174 (170–174 (FSLHW)) interacts with substrate. Mg(2+)-binding residues include N191, V195, R277, D278, F280, and N281. S334 serves as a coordination point for substrate.

It belongs to the methyltransferase superfamily. SABATH family. As to quaternary structure, homodimer. Mg(2+) is required as a cofactor. As to expression, expressed in seedling roots and leaves. Expressed in the stigma, funiculus, and vascular bundles in sepals, petals and stamens.

The enzyme catalyses (indol-3-yl)acetate + S-adenosyl-L-methionine = methyl (indol-3-yl)acetate + S-adenosyl-L-homocysteine. Catalyzes the methylation of the free carboxyl end of the plant hormone indole-3-acetic acid (IAA). Converts IAA to IAA methyl ester (MeIAA). Regulates IAA activities by IAA methylation. Methylation of IAA plays an important role in regulating plant development and auxin homeostasis. Required for correct leaf pattern formation. MeIAA seems to be an inactive form of IAA. This chain is Indole-3-acetate O-methyltransferase 1 (IAMT1), found in Arabidopsis thaliana (Mouse-ear cress).